A 319-amino-acid polypeptide reads, in one-letter code: Geranylgeranyl pyrophosphate synthase (319 aa).

Isopentenyl diphosphate-binding residues include Lys42, Arg45, and His74. Positions 81 and 85 each coordinate Mg(2+). Arg90 provides a ligand contact to dimethylallyl diphosphate. Arg91 contacts isopentenyl diphosphate. Dimethylallyl diphosphate-binding residues include Lys172, Thr173, Gln210, Lys226, and Lys236.

It belongs to the FPP/GGPP synthase family. As to quaternary structure, homodimer. The cofactor is Mg(2+).

The enzyme catalyses isopentenyl diphosphate + dimethylallyl diphosphate = (2E)-geranyl diphosphate + diphosphate. It catalyses the reaction isopentenyl diphosphate + (2E)-geranyl diphosphate = (2E,6E)-farnesyl diphosphate + diphosphate. It carries out the reaction isopentenyl diphosphate + (2E,6E)-farnesyl diphosphate = (2E,6E,10E)-geranylgeranyl diphosphate + diphosphate. Its pathway is isoprenoid biosynthesis; geranyl diphosphate biosynthesis; geranyl diphosphate from dimethylallyl diphosphate and isopentenyl diphosphate: step 1/1. It participates in isoprenoid biosynthesis; farnesyl diphosphate biosynthesis; farnesyl diphosphate from geranyl diphosphate and isopentenyl diphosphate: step 1/1. The protein operates within isoprenoid biosynthesis; geranylgeranyl diphosphate biosynthesis; geranylgeranyl diphosphate from farnesyl diphosphate and isopentenyl diphosphate: step 1/1. Functionally, catalyzes the addition of 3 molecules of isopentenyl diphosphate (IPP) onto dimethylallyl diphosphate (DMAPP) to form geranylgeranyl pyrophosphate (GGPP). Catalyzes the synthesis of geranylgeranyl pyrophosphate as a major product and of farnesyl pyrophosphate in smaller amounts. The polypeptide is Geranylgeranyl pyrophosphate synthase (Geoglobus acetivorans).